Consider the following 170-residue polypeptide: Crossover junction endodeoxyribonuclease RuvC (170 aa).

Catalysis depends on residues Asp-11, Glu-71, and Asp-143. Mg(2+) is bound by residues Asp-11, Glu-71, and Asp-143.

This sequence belongs to the RuvC family. Homodimer which binds Holliday junction (HJ) DNA. The HJ becomes 2-fold symmetrical on binding to RuvC with unstacked arms; it has a different conformation from HJ DNA in complex with RuvA. In the full resolvosome a probable DNA-RuvA(4)-RuvB(12)-RuvC(2) complex forms which resolves the HJ. Mg(2+) is required as a cofactor.

The protein localises to the cytoplasm. It carries out the reaction Endonucleolytic cleavage at a junction such as a reciprocal single-stranded crossover between two homologous DNA duplexes (Holliday junction).. In terms of biological role, the RuvA-RuvB-RuvC complex processes Holliday junction (HJ) DNA during genetic recombination and DNA repair. Endonuclease that resolves HJ intermediates. Cleaves cruciform DNA by making single-stranded nicks across the HJ at symmetrical positions within the homologous arms, yielding a 5'-phosphate and a 3'-hydroxyl group; requires a central core of homology in the junction. The consensus cleavage sequence is 5'-(A/T)TT(C/G)-3'. Cleavage occurs on the 3'-side of the TT dinucleotide at the point of strand exchange. HJ branch migration catalyzed by RuvA-RuvB allows RuvC to scan DNA until it finds its consensus sequence, where it cleaves and resolves the cruciform DNA. This Sinorhizobium fredii (strain NBRC 101917 / NGR234) protein is Crossover junction endodeoxyribonuclease RuvC.